Reading from the N-terminus, the 344-residue chain is Uroporphyrinogen decarboxylase (344 aa).

Residues 23-27, Asp73, Tyr149, Thr204, and His321 each bind substrate; that span reads RQAGR.

This sequence belongs to the uroporphyrinogen decarboxylase family. Homodimer.

Its subcellular location is the cytoplasm. It catalyses the reaction uroporphyrinogen III + 4 H(+) = coproporphyrinogen III + 4 CO2. Its pathway is porphyrin-containing compound metabolism; protoporphyrin-IX biosynthesis; coproporphyrinogen-III from 5-aminolevulinate: step 4/4. Its function is as follows. Catalyzes the decarboxylation of four acetate groups of uroporphyrinogen-III to yield coproporphyrinogen-III. The protein is Uroporphyrinogen decarboxylase of Francisella philomiragia subsp. philomiragia (strain ATCC 25017 / CCUG 19701 / FSC 153 / O#319-036).